The primary structure comprises 102 residues: uncharacterized protein (102 aa).

3 consecutive transmembrane segments (helical) span residues 1–21, 42–62, and 68–88; these read MVPLILLILLFSKFSTFLRPV, SIIDVTYTMHVFYMTIILILV, and SIHAFLGSLCLPSHVLDFSIV.

The protein resides in the membrane. This is an uncharacterized protein from Saccharomyces cerevisiae (strain ATCC 204508 / S288c) (Baker's yeast).